Reading from the N-terminus, the 173-residue chain is MSIILGIDPGSRVTGYGVIRQVGRQLTYLGSGCIRTKVDDLPSRLKLIYAGVTEIITQFQPDYFAIEQVFMAKNADSALKLGQARGVAIVAAVNQDLPVFEYAARQVKQTVVGIGSAEKSQVQHMVRTLLKLPANPQADAADALAIAITHCHVSQNAMQMSDSRLNLARGRLR.

Residues D8, E67, and D139 contribute to the active site. Mg(2+) is bound by residues D8, E67, and D139.

It belongs to the RuvC family. As to quaternary structure, homodimer which binds Holliday junction (HJ) DNA. The HJ becomes 2-fold symmetrical on binding to RuvC with unstacked arms; it has a different conformation from HJ DNA in complex with RuvA. In the full resolvosome a probable DNA-RuvA(4)-RuvB(12)-RuvC(2) complex forms which resolves the HJ. It depends on Mg(2+) as a cofactor.

The protein localises to the cytoplasm. The catalysed reaction is Endonucleolytic cleavage at a junction such as a reciprocal single-stranded crossover between two homologous DNA duplexes (Holliday junction).. Its function is as follows. The RuvA-RuvB-RuvC complex processes Holliday junction (HJ) DNA during genetic recombination and DNA repair. Endonuclease that resolves HJ intermediates. Cleaves cruciform DNA by making single-stranded nicks across the HJ at symmetrical positions within the homologous arms, yielding a 5'-phosphate and a 3'-hydroxyl group; requires a central core of homology in the junction. The consensus cleavage sequence is 5'-(A/T)TT(C/G)-3'. Cleavage occurs on the 3'-side of the TT dinucleotide at the point of strand exchange. HJ branch migration catalyzed by RuvA-RuvB allows RuvC to scan DNA until it finds its consensus sequence, where it cleaves and resolves the cruciform DNA. The polypeptide is Crossover junction endodeoxyribonuclease RuvC (Citrobacter koseri (strain ATCC BAA-895 / CDC 4225-83 / SGSC4696)).